A 371-amino-acid polypeptide reads, in one-letter code: Protein SPATA31F3 (371 aa).

Residues 7-29 (ILWDVGSSVYTYGSLFIIALIIW) form a helical membrane-spanning segment. Residues 62 to 86 (LRVKKRTTKEETEKLQKLLSNMKRQ) adopt a coiled-coil conformation. 2 stretches are compositionally biased toward polar residues: residues 189-203 (LSKV…LSSQ) and 244-266 (PQQQ…SSSS). Disordered stretches follow at residues 189–222 (LSKV…STDQ), 240–299 (YHPA…EAEM), and 326–371 (YKSE…KRNI). 2 positions are modified to phosphoserine: Ser-197 and Ser-198. A compositionally biased stretch (basic residues) spans 277–287 (QKKRKKTKKLV). Residues 330 to 362 (TGAKPKTGEPKKSSAKVRAEEPNLEKHAKDLKA) are compositionally biased toward basic and acidic residues.

This sequence belongs to the SPATA31 family.

Its subcellular location is the membrane. The chain is Protein SPATA31F3 (Spata31f3) from Mus musculus (Mouse).